The following is a 94-amino-acid chain: Protein translocase subunit SecE (94 aa).

Residues 1–32 form a disordered region; the sequence is MTDAVGSIDMPDAQDEAPDSKKSRKGGKRGKK. The segment covering 22–32 has biased composition (basic residues); sequence KSRKGGKRGKK. Residues 65–85 form a helical membrane-spanning segment; that stretch reads TVVIIFVVIMIGLVTLIDYGF.

It belongs to the SecE/SEC61-gamma family. As to quaternary structure, component of the Sec protein translocase complex. Heterotrimer consisting of SecY, SecE and SecG subunits. The heterotrimers can form oligomers, although 1 heterotrimer is thought to be able to translocate proteins. Interacts with the ribosome. Interacts with SecDF, and other proteins may be involved. Interacts with SecA.

Its subcellular location is the cell membrane. Functionally, essential subunit of the Sec protein translocation channel SecYEG. Clamps together the 2 halves of SecY. May contact the channel plug during translocation. In Streptomyces coelicolor (strain ATCC BAA-471 / A3(2) / M145), this protein is Protein translocase subunit SecE.